A 183-amino-acid polypeptide reads, in one-letter code: MSALRQVMCRSTASLQLYQANRAAAARWASTATDGGPLDPKTALARPEELEQRNKLSGKITVPTAVNLSPISGVPEEHIRERRVRIHIPPKNAMQSGTDNVNTWQIEFDNRERWENPLMGWASSGDPLSNMNVQFGSPEEAITFCERNGWRWYVDGAAKPKKERVKNYGINFAWNKRTRVSTK.

A mitochondrion-targeting transit peptide spans 1–28 (MSALRQVMCRSTASLQLYQANRAAAARW). Serine 181 is modified (phosphoserine).

The protein belongs to the complex I NDUFS4 subunit family.

The protein localises to the mitochondrion inner membrane. In terms of biological role, accessory subunit of the mitochondrial membrane respiratory chain NADH dehydrogenase (Complex I), that is believed not to be involved in catalysis. Complex I functions in the transfer of electrons from NADH to the respiratory chain. The immediate electron acceptor for the enzyme is believed to be ubiquinone. This is NADH dehydrogenase [ubiquinone] iron-sulfur protein 4, mitochondrial from Drosophila melanogaster (Fruit fly).